The sequence spans 117 residues: Protein OPG035 (117 aa).

It belongs to the poxviridae OPG035 family.

Functionally, bcl-2-like protein which contributes to virulence by preventing host NF-kappa-B activation in response to pro-inflammatory stimuli such as TNF-alpha or IL1B. This chain is Protein OPG035 (OPG035), found in Homo sapiens (Human).